The chain runs to 314 residues: DNA-directed RNA polymerase subunit alpha (314 aa).

The segment at Met-1–Thr-228 is alpha N-terminal domain (alpha-NTD). The interval Glu-246–Asp-314 is alpha C-terminal domain (alpha-CTD).

This sequence belongs to the RNA polymerase alpha chain family. In terms of assembly, homodimer. The RNAP catalytic core consists of 2 alpha, 1 beta, 1 beta' and 1 omega subunit. When a sigma factor is associated with the core the holoenzyme is formed, which can initiate transcription.

It catalyses the reaction RNA(n) + a ribonucleoside 5'-triphosphate = RNA(n+1) + diphosphate. In terms of biological role, DNA-dependent RNA polymerase catalyzes the transcription of DNA into RNA using the four ribonucleoside triphosphates as substrates. The chain is DNA-directed RNA polymerase subunit alpha from Bacillus cytotoxicus (strain DSM 22905 / CIP 110041 / 391-98 / NVH 391-98).